The following is an 85-amino-acid chain: U4-theraphotoxin-Hhn1a (85 aa).

Positions 1-22 (MKMTLIAILTCAAVLVLHTTAA) are cleaved as a signal peptide. Residues 23–48 (EELEAESQLMEVGMPDTELEAVDEER) constitute a propeptide that is removed on maturation. 3 cysteine pairs are disulfide-bonded: cysteine 52–cysteine 66, cysteine 56–cysteine 77, and cysteine 71–cysteine 82.

Belongs to the neurotoxin 12 (Hwtx-2) family. 02 (Hwtx-2) subfamily. Monomer. In terms of tissue distribution, expressed by the venom gland.

The protein localises to the secreted. In terms of biological role, neurotoxin active on both insects and mammals. This Cyriopagopus hainanus (Chinese bird spider) protein is U4-theraphotoxin-Hhn1a.